The sequence spans 350 residues: tRNA uridine(34) hydroxylase (350 aa).

Residues 146–240 (DDPEAVFVDM…YARRAREQGL (95 aa)) form the Rhodanese domain. Catalysis depends on cysteine 200, which acts as the Cysteine persulfide intermediate.

This sequence belongs to the TrhO family.

It catalyses the reaction uridine(34) in tRNA + AH2 + O2 = 5-hydroxyuridine(34) in tRNA + A + H2O. Its function is as follows. Catalyzes oxygen-dependent 5-hydroxyuridine (ho5U) modification at position 34 in tRNAs. This is tRNA uridine(34) hydroxylase from Erwinia tasmaniensis (strain DSM 17950 / CFBP 7177 / CIP 109463 / NCPPB 4357 / Et1/99).